Here is a 350-residue protein sequence, read N- to C-terminus: tRNA uridine(34) hydroxylase (350 aa).

The region spanning 146–240 is the Rhodanese domain; it reads DDPDALFIDM…YARKAREQGL (95 aa). Cysteine 200 serves as the catalytic Cysteine persulfide intermediate.

Belongs to the TrhO family.

It catalyses the reaction uridine(34) in tRNA + AH2 + O2 = 5-hydroxyuridine(34) in tRNA + A + H2O. In terms of biological role, catalyzes oxygen-dependent 5-hydroxyuridine (ho5U) modification at position 34 in tRNAs. The protein is tRNA uridine(34) hydroxylase of Shigella flexneri serotype 5b (strain 8401).